The primary structure comprises 144 residues: Small ribosomal subunit protein eS19A (144 aa).

Belongs to the eukaryotic ribosomal protein eS19 family. In terms of assembly, component of the small ribosomal subunit (SSU). Mature yeast ribosomes consist of a small (40S) and a large (60S) subunit. The 40S small subunit contains 1 molecule of ribosomal RNA (18S rRNA) and 33 different proteins (encoded by 57 genes). The large 60S subunit contains 3 rRNA molecules (25S, 5.8S and 5S rRNA) and 46 different proteins (encoded by 81 genes).

Its subcellular location is the cytoplasm. Its function is as follows. Component of the ribosome, a large ribonucleoprotein complex responsible for the synthesis of proteins in the cell. The small ribosomal subunit (SSU) binds messenger RNAs (mRNAs) and translates the encoded message by selecting cognate aminoacyl-transfer RNA (tRNA) molecules. The large subunit (LSU) contains the ribosomal catalytic site termed the peptidyl transferase center (PTC), which catalyzes the formation of peptide bonds, thereby polymerizing the amino acids delivered by tRNAs into a polypeptide chain. The nascent polypeptides leave the ribosome through a tunnel in the LSU and interact with protein factors that function in enzymatic processing, targeting, and the membrane insertion of nascent chains at the exit of the ribosomal tunnel. eS19 is required for proper maturation of the small (40S) ribosomal subunit. Binds to 40S pre-ribosomal particles, probably required after association of NOC4 but before association of ENP1, TSR1 and RIO2 with 20/21S pre-rRNA. The protein is Small ribosomal subunit protein eS19A of Saccharomyces cerevisiae (strain ATCC 204508 / S288c) (Baker's yeast).